We begin with the raw amino-acid sequence, 89 residues long: Small ribosomal subunit protein uS15 (89 aa).

The protein belongs to the universal ribosomal protein uS15 family. In terms of assembly, part of the 30S ribosomal subunit. Forms a bridge to the 50S subunit in the 70S ribosome, contacting the 23S rRNA.

In terms of biological role, one of the primary rRNA binding proteins, it binds directly to 16S rRNA where it helps nucleate assembly of the platform of the 30S subunit by binding and bridging several RNA helices of the 16S rRNA. Its function is as follows. Forms an intersubunit bridge (bridge B4) with the 23S rRNA of the 50S subunit in the ribosome. This is Small ribosomal subunit protein uS15 from Blochmanniella pennsylvanica (strain BPEN).